Consider the following 199-residue polypeptide: Mediator of RNA polymerase II transcription subunit 7 (199 aa).

The protein belongs to the Mediator complex subunit 7 family. Component of the Mediator complex.

The protein localises to the nucleus. Functionally, component of the Mediator complex, a coactivator involved in the regulated transcription of nearly all RNA polymerase II-dependent genes. Mediator functions as a bridge to convey information from gene-specific regulatory proteins to the basal RNA polymerase II transcription machinery. Mediator is recruited to promoters by direct interactions with regulatory proteins and serves as a scaffold for the assembly of a functional preinitiation complex with RNA polymerase II and the general transcription factors. This chain is Mediator of RNA polymerase II transcription subunit 7 (MED7), found in Eremothecium gossypii (strain ATCC 10895 / CBS 109.51 / FGSC 9923 / NRRL Y-1056) (Yeast).